The following is a 203-amino-acid chain: Recombination protein RecR (203 aa).

A C4-type zinc finger spans residues 56–71; sequence CAVCGNVSDDERCRIC. The Toprim domain maps to 79 to 179; sequence SVVCVVEEPK…TVTRIASGLP (101 aa).

Belongs to the RecR family.

Its function is as follows. May play a role in DNA repair. It seems to be involved in an RecBC-independent recombinational process of DNA repair. It may act with RecF and RecO. This Mycobacterium avium (strain 104) protein is Recombination protein RecR.